Reading from the N-terminus, the 403-residue chain is Endophilin-B2 (403 aa).

The tract at residues 1–27 is membrane-binding amphipathic helix; the sequence is MDFNVKKLASDAGVFFSRAMQFTEEKL. Residues 24–287 enclose the BAR domain; that stretch reads EEKLGQAEKT…LGRFSGTFVG (264 aa). A coiled-coil region spans residues 210 to 233; that stretch reads WSDEVEKAEHELRLTQTEFDRQAE. In terms of domain architecture, SH3 spans 343–403; that stretch reads SGTRKARVLY…VPVTYLELLS (61 aa).

Belongs to the endophilin family. In terms of assembly, homodimer, and heterodimer with SH3GLB1.

Its subcellular location is the cytoplasm. The chain is Endophilin-B2 from Gallus gallus (Chicken).